A 432-amino-acid polypeptide reads, in one-letter code: Adenosylhomocysteinase (432 aa).

Substrate is bound by residues T57, D131, and E156. An NAD(+)-binding site is contributed by 157 to 159 (TTT). Position 183 is a phosphoserine (S183). Substrate contacts are provided by K186 and D190. K186 carries the N6-(2-hydroxyisobutyryl)lysine modification. Y193 is subject to Phosphotyrosine. NAD(+) contacts are provided by residues 222–227 (GDVGKG), E243, N248, 299–301 (IGH), N346, H353, K426, 426–430 (KPDHY), and Y430.

The protein belongs to the adenosylhomocysteinase family. In terms of assembly, homotetramer. Interaction with AHCYL1. NAD(+) is required as a cofactor.

The protein resides in the cytoplasm. It is found in the melanosome. It localises to the nucleus. The protein localises to the endoplasmic reticulum. It catalyses the reaction S-adenosyl-L-homocysteine + H2O = L-homocysteine + adenosine. It functions in the pathway amino-acid biosynthesis; L-homocysteine biosynthesis; L-homocysteine from S-adenosyl-L-homocysteine: step 1/1. Catalyzes the hydrolysis of S-adenosyl-L-homocysteine to form adenosine and homocysteine. Binds copper ions. In Rattus norvegicus (Rat), this protein is Adenosylhomocysteinase (Ahcy).